We begin with the raw amino-acid sequence, 191 residues long: Ribosome maturation factor RimM (191 aa).

The region spanning 99–172 (TDEFYQIDLI…FLVVDPVAAG (74 aa)) is the PRC barrel domain.

It belongs to the RimM family. As to quaternary structure, binds ribosomal protein uS19.

The protein resides in the cytoplasm. Its function is as follows. An accessory protein needed during the final step in the assembly of 30S ribosomal subunit, possibly for assembly of the head region. Essential for efficient processing of 16S rRNA. May be needed both before and after RbfA during the maturation of 16S rRNA. It has affinity for free ribosomal 30S subunits but not for 70S ribosomes. This is Ribosome maturation factor RimM from Bartonella bacilliformis (strain ATCC 35685 / KC583 / Herrer 020/F12,63).